Consider the following 172-residue polypeptide: Co-chaperone protein HscB (172 aa).

Positions 2 to 74 (DYFTLFGLPI…LKRAEYMLSL (73 aa)) constitute a J domain.

This sequence belongs to the HscB family. In terms of assembly, interacts with HscA and stimulates its ATPase activity. Interacts with IscU.

Co-chaperone involved in the maturation of iron-sulfur cluster-containing proteins. Seems to help targeting proteins to be folded toward HscA. The chain is Co-chaperone protein HscB from Pectobacterium atrosepticum (strain SCRI 1043 / ATCC BAA-672) (Erwinia carotovora subsp. atroseptica).